Consider the following 389-residue polypeptide: Succinate--CoA ligase [ADP-forming] subunit beta (389 aa).

In terms of domain architecture, ATP-grasp spans Lys9 to Glu244. Residues Lys46, Gly53–Gly55, Glu99, Ala102, and Glu107 each bind ATP. Residues Asn199 and Asp213 each coordinate Mg(2+). Residues Asn264 and Gly321–Met323 each bind substrate.

The protein belongs to the succinate/malate CoA ligase beta subunit family. In terms of assembly, heterotetramer of two alpha and two beta subunits. Mg(2+) is required as a cofactor.

It catalyses the reaction succinate + ATP + CoA = succinyl-CoA + ADP + phosphate. It carries out the reaction GTP + succinate + CoA = succinyl-CoA + GDP + phosphate. Its pathway is carbohydrate metabolism; tricarboxylic acid cycle; succinate from succinyl-CoA (ligase route): step 1/1. In terms of biological role, succinyl-CoA synthetase functions in the citric acid cycle (TCA), coupling the hydrolysis of succinyl-CoA to the synthesis of either ATP or GTP and thus represents the only step of substrate-level phosphorylation in the TCA. The beta subunit provides nucleotide specificity of the enzyme and binds the substrate succinate, while the binding sites for coenzyme A and phosphate are found in the alpha subunit. This is Succinate--CoA ligase [ADP-forming] subunit beta from Paraburkholderia xenovorans (strain LB400).